Consider the following 427-residue polypeptide: Glutamate-1-semialdehyde 2,1-aminomutase (427 aa).

Lys-265 is subject to N6-(pyridoxal phosphate)lysine.

The protein belongs to the class-III pyridoxal-phosphate-dependent aminotransferase family. HemL subfamily. As to quaternary structure, homodimer. It depends on pyridoxal 5'-phosphate as a cofactor.

The protein resides in the cytoplasm. It catalyses the reaction (S)-4-amino-5-oxopentanoate = 5-aminolevulinate. Its pathway is porphyrin-containing compound metabolism; protoporphyrin-IX biosynthesis; 5-aminolevulinate from L-glutamyl-tRNA(Glu): step 2/2. In Bordetella pertussis (strain Tohama I / ATCC BAA-589 / NCTC 13251), this protein is Glutamate-1-semialdehyde 2,1-aminomutase.